Consider the following 786-residue polypeptide: Endonuclease MutS2 (786 aa).

ATP is bound at residue 335 to 342 (GPNTGGKT). A Smr domain is found at 711-786 (LDLRGERFEN…GLGVTVVELK (76 aa)).

The protein belongs to the DNA mismatch repair MutS family. MutS2 subfamily. Homodimer. Binds to stalled ribosomes, contacting rRNA.

Functionally, endonuclease that is involved in the suppression of homologous recombination and thus may have a key role in the control of bacterial genetic diversity. Its function is as follows. Acts as a ribosome collision sensor, splitting the ribosome into its 2 subunits. Detects stalled/collided 70S ribosomes which it binds and splits by an ATP-hydrolysis driven conformational change. Acts upstream of the ribosome quality control system (RQC), a ribosome-associated complex that mediates the extraction of incompletely synthesized nascent chains from stalled ribosomes and their subsequent degradation. Probably generates substrates for RQC. This Bacillus thuringiensis (strain Al Hakam) protein is Endonuclease MutS2.